Consider the following 332-residue polypeptide: GTP cyclohydrolase-2 (332 aa).

2 disordered regions span residues 1 to 20 (MASK…SETH) and 25 to 46 (PLLS…IPPE). A compositionally biased stretch (polar residues) spans 29–41 (PTLTPSHIPSQTP). 171 to 175 (RIHSE) is a binding site for GTP. 3 residues coordinate Zn(2+): Cys176, Cys187, and Cys189. GTP contacts are provided by residues Gln192, 214 to 216 (EGR), and Thr236. Residue Asp248 is the Proton acceptor of the active site. Arg250 (nucleophile) is an active-site residue. Positions 271 and 276 each coordinate GTP.

Belongs to the GTP cyclohydrolase II family. Requires Zn(2+) as cofactor.

The enzyme catalyses GTP + 4 H2O = 2,5-diamino-6-hydroxy-4-(5-phosphoribosylamino)-pyrimidine + formate + 2 phosphate + 3 H(+). It functions in the pathway cofactor biosynthesis; riboflavin biosynthesis; 5-amino-6-(D-ribitylamino)uracil from GTP: step 1/4. Functionally, catalyzes the conversion of GTP to 2,5-diamino-6-ribosylamino-4(3H)-pyrimidinone 5'-phosphate (DARP), formate and pyrophosphate. This is GTP cyclohydrolase-2 (RIB1) from Meyerozyma guilliermondii (strain ATCC 6260 / CBS 566 / DSM 6381 / JCM 1539 / NBRC 10279 / NRRL Y-324) (Yeast).